A 459-amino-acid chain; its full sequence is UDP-N-acetylmuramoylalanine--D-glutamate ligase (459 aa).

131–137 provides a ligand contact to ATP; it reads GANGKST.

Belongs to the MurCDEF family.

It is found in the cytoplasm. The catalysed reaction is UDP-N-acetyl-alpha-D-muramoyl-L-alanine + D-glutamate + ATP = UDP-N-acetyl-alpha-D-muramoyl-L-alanyl-D-glutamate + ADP + phosphate + H(+). It functions in the pathway cell wall biogenesis; peptidoglycan biosynthesis. In terms of biological role, cell wall formation. Catalyzes the addition of glutamate to the nucleotide precursor UDP-N-acetylmuramoyl-L-alanine (UMA). This is UDP-N-acetylmuramoylalanine--D-glutamate ligase from Methylococcus capsulatus (strain ATCC 33009 / NCIMB 11132 / Bath).